Consider the following 81-residue polypeptide: Sulfur carrier protein TusA (81 aa).

Residue Cys-19 is the Cysteine persulfide intermediate of the active site.

This sequence belongs to the sulfur carrier protein TusA family.

It is found in the cytoplasm. Functionally, sulfur carrier protein which probably makes part of a sulfur-relay system. This is Sulfur carrier protein TusA from Aeromonas salmonicida (strain A449).